A 126-amino-acid polypeptide reads, in one-letter code: Large-conductance mechanosensitive channel (126 aa).

2 helical membrane passes run 14-34 (VIDLAVGVIIGSAFTAIVKSL) and 67-87 (GSFLNAIINFFIVAIVVFILV).

It belongs to the MscL family. Homopentamer.

The protein resides in the cell membrane. Functionally, channel that opens in response to stretch forces in the membrane lipid bilayer. May participate in the regulation of osmotic pressure changes within the cell. In Lactiplantibacillus plantarum (strain ATCC BAA-793 / NCIMB 8826 / WCFS1) (Lactobacillus plantarum), this protein is Large-conductance mechanosensitive channel.